The sequence spans 199 residues: N-(5'-phosphoribosyl)anthranilate isomerase (199 aa).

The protein belongs to the TrpF family.

The catalysed reaction is N-(5-phospho-beta-D-ribosyl)anthranilate = 1-(2-carboxyphenylamino)-1-deoxy-D-ribulose 5-phosphate. Its pathway is amino-acid biosynthesis; L-tryptophan biosynthesis; L-tryptophan from chorismate: step 3/5. The protein is N-(5'-phosphoribosyl)anthranilate isomerase of Streptococcus pneumoniae serotype 19F (strain G54).